We begin with the raw amino-acid sequence, 182 residues long: MTLKALAQSLGITLKYLFSKPVTVPYPDAPVALKPRFHGRHVLTRHPNGLEKCIGCSLCAAACPAYAIYVEPAENDPENPVSAGERYAKVYEINMLRCIFCGLCEEACPTGAIVLGYDFEMADYEYSDLVYGKEDMLVDVVGTKPQRREAKRTGKPVKVGYVVPYVRPELEGFKAPTEGGKR.

2 consecutive 4Fe-4S ferredoxin-type domains span residues 43-73 (LTRH…VEPA) and 89-118 (KVYE…LGYD). Residues Cys53, Cys56, Ser57, Cys59, Cys63, Cys98, Ile99, Cys101, Cys104, and Cys108 each coordinate [4Fe-4S] cluster.

It belongs to the complex I 23 kDa subunit family. In terms of assembly, NDH-1 is composed of 15 different subunits, Nqo1 to Nqo15. The complex has a L-shaped structure, with the hydrophobic arm (subunits Nqo7, Nqo8 and Nqo10 to Nqo14) embedded in the membrane and the hydrophilic peripheral arm (subunits Nqo1 to Nqo6, Nqo9 and Nqo15) protruding into the bacterial cytoplasm. The hydrophilic domain contains all the redox centers. [4Fe-4S] cluster serves as cofactor.

Its subcellular location is the cell membrane. The catalysed reaction is a quinone + NADH + 5 H(+)(in) = a quinol + NAD(+) + 4 H(+)(out). In terms of biological role, NDH-1 shuttles electrons from NADH, via FMN and iron-sulfur (Fe-S) centers, to quinones in the respiratory chain. The immediate electron acceptor for the enzyme in this species is menaquinone. Couples the redox reaction to proton translocation (for every two electrons transferred, four hydrogen ions are translocated across the cytoplasmic membrane), and thus conserves the redox energy in a proton gradient required for the synthesis of ATP. The role of the Nqo9 subunit appears to provide a 'connecting chain' of two clusters between cluster N5 and the terminal cluster N2, and to stabilize the structure of the complex by interacting with other subunits. The sequence is that of NADH-quinone oxidoreductase subunit 9 (nqo9) from Thermus thermophilus (strain ATCC 27634 / DSM 579 / HB8).